A 411-amino-acid chain; its full sequence is Carbohydrate sulfotransferase 1 (411 aa).

Position 1 (M1) is a topological domain, cytoplasmic. Residues 2–23 form a helical; Signal-anchor for type II membrane protein membrane-spanning segment; the sequence is QCSWKAVLLLALASIAIQYTAI. Topologically, residues 24–411 are lumenal; the sequence is RTFTAKSFHT…VEERDFRPFL (388 aa). N56 carries N-linked (GlcNAc...) asparagine glycosylation. 69–75 is a 3'-phosphoadenylyl sulfate binding site; sequence TRSGSSF. 2 N-linked (GlcNAc...) asparagine glycosylation sites follow: N145 and N189. 234-242 contributes to the 3'-phosphoadenylyl sulfate binding site; sequence RDPRGILAS. N-linked (GlcNAc...) asparagine glycosylation is present at N334. A Cell attachment site motif is present at residues 337-339; that stretch reads RGD.

It belongs to the sulfotransferase 1 family. Gal/GlcNAc/GalNAc subfamily.

It is found in the golgi apparatus membrane. The catalysed reaction is 3'-phosphoadenylyl sulfate + keratan = adenosine 3',5'-bisphosphate + keratan 6'-sulfate.. Its pathway is glycan metabolism. Its function is as follows. Sulfotransferase that utilizes 3'-phospho-5'-adenylyl sulfate (PAPS) as sulfonate donor to catalyze the transfer of sulfate to position 6 of internal galactose (Gal) residues of keratan. Cooperates with B4GALT4 and B3GNT7 glycosyltransferases and CHST6 sulfotransferase to construct and elongate disulfated disaccharide unit [-&gt;3(6-sulfoGalbeta)1-&gt;4(6-sulfoGlcNAcbeta)1-&gt;] within keratan sulfate polymer. Has a preference for sulfating keratan sulfate, but it also transfers sulfate to the unsulfated polymer. Involved in biosynthesis of phosphacan, a major keratan sulfate proteoglycan in the developing brain. Involved in biosynthesis of 6-sulfoGalbeta-containing O-linked glycans in high endothelial venules of lymph nodes. May act in a synergistic manner with CHST4 to generate sialyl 6',6-disulfo Lewis X motif, a recognition determinant for immune cell receptors implicated in leukocyte trafficking. Catalyzes sulfation of N-acetyllactosamine (LacNAc) oligosaccharides with highest efficiency for sialylated LacNAc structures. The chain is Carbohydrate sulfotransferase 1 (Chst1) from Rattus norvegicus (Rat).